We begin with the raw amino-acid sequence, 70 residues long: Large ribosomal subunit protein uL29 (70 aa).

This sequence belongs to the universal ribosomal protein uL29 family.

This is Large ribosomal subunit protein uL29 from Clostridium botulinum (strain ATCC 19397 / Type A).